A 441-amino-acid chain; its full sequence is uncharacterized protein (441 aa).

The next 11 helical transmembrane spans lie at 62-82 (FLSL…FEIG), 88-108 (LILT…KLFG), 112-132 (IALT…IIAL), 154-174 (ALLH…LLVV), 192-212 (WMFF…YLLY), 224-244 (ALMI…GVAS), 247-267 (ANLS…YMVC), 312-332 (IVLF…ATFA), 335-355 (ISVM…IIFL), 363-383 (QGMW…NLLL), and 399-419 (ILCS…LLYA).

The protein localises to the membrane. This is an uncharacterized protein from Schizosaccharomyces pombe (strain 972 / ATCC 24843) (Fission yeast).